A 358-amino-acid chain; its full sequence is Chorismate synthase (358 aa).

Position 46 (Arg-46) interacts with NADP(+). Residues 123–125 (RSS), 235–236 (NA), Gly-275, 290–294 (KATPS), and Arg-316 contribute to the FMN site.

Belongs to the chorismate synthase family. In terms of assembly, homotetramer. Requires FMNH2 as cofactor.

The catalysed reaction is 5-O-(1-carboxyvinyl)-3-phosphoshikimate = chorismate + phosphate. It participates in metabolic intermediate biosynthesis; chorismate biosynthesis; chorismate from D-erythrose 4-phosphate and phosphoenolpyruvate: step 7/7. Catalyzes the anti-1,4-elimination of the C-3 phosphate and the C-6 proR hydrogen from 5-enolpyruvylshikimate-3-phosphate (EPSP) to yield chorismate, which is the branch point compound that serves as the starting substrate for the three terminal pathways of aromatic amino acid biosynthesis. This reaction introduces a second double bond into the aromatic ring system. The chain is Chorismate synthase from Aliarcobacter butzleri (strain RM4018) (Arcobacter butzleri).